Reading from the N-terminus, the 49-residue chain is Large ribosomal subunit protein eL40 (49 aa).

This sequence belongs to the eukaryotic ribosomal protein eL40 family.

This chain is Large ribosomal subunit protein eL40, found in Halorubrum lacusprofundi (strain ATCC 49239 / DSM 5036 / JCM 8891 / ACAM 34).